The following is a 236-amino-acid chain: Mitochondrial coenzyme A diphosphatase NUDT8 (236 aa).

Positions 25–172 (LRARPASAAV…HFRYTLPVFL (148 aa)) constitute a Nudix hydrolase domain. At K70 the chain carries N6-succinyllysine. Positions 70 to 91 (KCDPADQDVVHTALRETREELG) match the Nudix box motif. Mg(2+) contacts are provided by E85 and E89.

It belongs to the Nudix hydrolase family. As to quaternary structure, monomer. The cofactor is Mg(2+). Mn(2+) is required as a cofactor.

The protein localises to the mitochondrion. It carries out the reaction an acyl-CoA + H2O = an acyl-4'-phosphopantetheine + adenosine 3',5'-bisphosphate + 2 H(+). The enzyme catalyses CoA + H2O = (R)-4'-phosphopantetheine + adenosine 3',5'-bisphosphate + 2 H(+). It catalyses the reaction acetyl-CoA + H2O = S-acetyl-4'-phosphopantetheine + adenosine 3',5'-bisphosphate + 2 H(+). The catalysed reaction is butanoyl-CoA + H2O = S-butanoyl-4'-phosphopantetheine + adenosine 3',5'-bisphosphate + 2 H(+). It carries out the reaction hexanoyl-CoA + H2O = hexanoyl-4'-phosphopantetheine + adenosine 3',5'-bisphosphate + 2 H(+). The enzyme catalyses octanoyl-CoA + H2O = S-octanoyl-4'-phosphopantetheine + adenosine 3',5'-bisphosphate + 2 H(+). It catalyses the reaction propanoyl-CoA + H2O = propanoyl-4'-phosphopantetheine + adenosine 3',5'-bisphosphate + 2 H(+). The catalysed reaction is malonyl-CoA + H2O = malonyl-4'-phosphopantetheine + adenosine 3',5'-bisphosphate + 2 H(+). It carries out the reaction succinyl-CoA + H2O = succinyl-4'-phosphopantetheine + adenosine 3',5'-bisphosphate + 2 H(+). The enzyme catalyses a 5'-end CoA-ribonucleoside in mRNA + H2O = a 5'-end phospho-adenosine-phospho-ribonucleoside in mRNA + (R)-4'-phosphopantetheine + 2 H(+). In terms of biological role, acyl-CoA diphosphatase that mediates the hydrolysis of a wide range of CoA and CoA esters yielding 3',5'-ADP and the corresponding 4'-phosphopantetheine derivative as products. Hydrolyzes short- and medium-chain acyl-CoAs, exhibiting the highest activity toward free CoA, hexanoyl-CoA, and octanoyl-CoA and the lowest activity against acetyl-CoA. Exhibits decapping activity towards dpCoA-capped RNAs in vitro. This chain is Mitochondrial coenzyme A diphosphatase NUDT8 (NUDT8), found in Homo sapiens (Human).